Consider the following 679-residue polypeptide: Penicillin-binding protein PbpB (679 aa).

The segment at 1–74 (MSRAAPRRAS…STRARRTRQV (74 aa)) is disordered. The Cytoplasmic portion of the chain corresponds to 1-90 (MSRAAPRRAS…GASFVFRHRT (90 aa)). Residues 42 to 54 (ARQAQEATKSRPA) show a composition bias toward polar residues. Residues 91 to 111 (GNAVILVLMLVAATQLFFLQV) traverse the membrane as a helical segment. The Extracellular portion of the chain corresponds to 112 to 679 (SHAAGLRAQA…PGPPLVLQAT (568 aa)). The active-site Acyl-ester intermediate is Ser-386.

Belongs to the transpeptidase family. Interacts with Wag31. Post-translationally, cleaved by Rip1 in response to oxidative stress (H(2)O(2)), prevented by Wag31. Cleavage probably occurs near residues 102-103.

The protein localises to the cell membrane. The protein operates within cell wall biogenesis; peptidoglycan biosynthesis. Its function is as follows. Synthesis of cross-linked peptidoglycan from the lipid intermediates. This chain is Penicillin-binding protein PbpB (pbpB), found in Mycobacterium tuberculosis (strain ATCC 25618 / H37Rv).